Consider the following 75-residue polypeptide: CLAVATA3/ESR (CLE)-related protein 2 (75 aa).

A signal peptide spans 1–22 (MAKLSFTFCFLLFLLLSSIAAG). Positions 40 to 75 (PSIEATSPTVEDDQAAGSHGKSPERLSPGGPDPQHH) are disordered. Hydroxyproline occurs at positions 67 and 70. Proline 70 carries an O-linked (Ara...) hydroxyproline glycan.

This sequence belongs to the CLV3/ESR signal peptide family. Interacts with the extracellular leucine-rich repeat region of CLV1. Post-translationally, the O-glycosylation (arabinosylation) of the hydroxyproline Pro-70 enhances binding affinity of the CLE2p peptide for its receptor. Mostly expressed in roots and seedlings, and, to a lower extent, in apex.

It is found in the secreted. It localises to the extracellular space. Functionally, extracellular signal peptide that regulates cell fate. May act with CLV1 as a ligand-receptor pair in a signal transduction pathway, coordinating growth between adjacent meristematic regions. The protein is CLAVATA3/ESR (CLE)-related protein 2 of Arabidopsis thaliana (Mouse-ear cress).